The chain runs to 141 residues: Hemoglobin subunit alpha-A (141 aa).

The Globin domain maps to 1–141; the sequence is VLSASDKANV…VGTVLTAKYR (141 aa). Residue His58 coordinates O2. His87 contacts heme b.

The protein belongs to the globin family. In terms of assembly, heterotetramer of two alpha chains and two beta chains. As to expression, red blood cells.

Its function is as follows. Involved in oxygen transport from the lung to the various peripheral tissues. The chain is Hemoglobin subunit alpha-A (HBAA) from Sturnus vulgaris (Starling).